Consider the following 506-residue polypeptide: Glutamate--tRNA ligase (506 aa).

Residues 24-34 carry the 'HIGH' region motif; sequence PSPTGLQHIGG. Zn(2+) contacts are provided by C121, C123, C148, and H150. A 'KMSKS' region motif is present at residues 266 to 270; the sequence is KLSKR. Residue K269 coordinates ATP.

It belongs to the class-I aminoacyl-tRNA synthetase family. Glutamate--tRNA ligase type 1 subfamily. As to quaternary structure, monomer. It depends on Zn(2+) as a cofactor.

It localises to the cytoplasm. It carries out the reaction tRNA(Glu) + L-glutamate + ATP = L-glutamyl-tRNA(Glu) + AMP + diphosphate. Its function is as follows. Catalyzes the attachment of glutamate to tRNA(Glu) in a two-step reaction: glutamate is first activated by ATP to form Glu-AMP and then transferred to the acceptor end of tRNA(Glu). The protein is Glutamate--tRNA ligase of Borrelia recurrentis (strain A1).